The following is a 222-amino-acid chain: Ribosomal RNA small subunit methyltransferase I (222 aa).

It belongs to the methyltransferase superfamily. RsmI family.

Its subcellular location is the cytoplasm. The enzyme catalyses cytidine(1402) in 16S rRNA + S-adenosyl-L-methionine = 2'-O-methylcytidine(1402) in 16S rRNA + S-adenosyl-L-homocysteine + H(+). In terms of biological role, catalyzes the 2'-O-methylation of the ribose of cytidine 1402 (C1402) in 16S rRNA. The sequence is that of Ribosomal RNA small subunit methyltransferase I from Mycoplasmopsis pulmonis (strain UAB CTIP) (Mycoplasma pulmonis).